The primary structure comprises 398 residues: Methionine import ATP-binding protein MetN 2 (398 aa).

The 240-residue stretch at 43–282 (VSLEQVGKVF…PRHGATRALL (240 aa)) folds into the ABC transporter domain. 79–86 (GRSGAGKS) is an ATP binding site.

The protein belongs to the ABC transporter superfamily. Methionine importer (TC 3.A.1.24) family. As to quaternary structure, the complex is composed of two ATP-binding proteins (MetN), two transmembrane proteins (MetI) and a solute-binding protein (MetQ).

The protein resides in the cell inner membrane. It catalyses the reaction L-methionine(out) + ATP + H2O = L-methionine(in) + ADP + phosphate + H(+). The catalysed reaction is D-methionine(out) + ATP + H2O = D-methionine(in) + ADP + phosphate + H(+). Functionally, part of the ABC transporter complex MetNIQ involved in methionine import. Responsible for energy coupling to the transport system. In Burkholderia lata (strain ATCC 17760 / DSM 23089 / LMG 22485 / NCIMB 9086 / R18194 / 383), this protein is Methionine import ATP-binding protein MetN 2.